Consider the following 737-residue polypeptide: Catalase-peroxidase (737 aa).

Residues 102-225 constitute a cross-link (tryptophyl-tyrosyl-methioninium (Trp-Tyr) (with M-251)); sequence WHSAGTYRTG…LGAVQMGLIY (124 aa). Histidine 103 functions as the Proton acceptor in the catalytic mechanism. The tryptophyl-tyrosyl-methioninium (Tyr-Met) (with W-102) cross-link spans 225–251; sequence YVNPEGPNGKPDPLAAAHDIRETFARM. Residue histidine 266 coordinates heme b.

This sequence belongs to the peroxidase family. Peroxidase/catalase subfamily. In terms of assembly, homodimer or homotetramer. The cofactor is heme b. In terms of processing, formation of the three residue Trp-Tyr-Met cross-link is important for the catalase, but not the peroxidase activity of the enzyme.

It catalyses the reaction H2O2 + AH2 = A + 2 H2O. It carries out the reaction 2 H2O2 = O2 + 2 H2O. In terms of biological role, bifunctional enzyme with both catalase and broad-spectrum peroxidase activity. The protein is Catalase-peroxidase of Caulobacter sp. (strain K31).